The primary structure comprises 410 residues: Putative odorant receptor 65c (410 aa).

Residues 1 to 59 lie on the Cytoplasmic side of the membrane; it reads MDIRGNVHRFVKFYIDGWKHFRDPTMESSYSAVYYWREQMKAMFLYTTSKERQMPYRSS. The chain crosses the membrane as a helical span at residues 60–80; it reads WHTLVIIQATVCFLTMCYGVT. Over 81–92 the chain is Extracellular; sequence ESLGDKVQMGRD. A helical membrane pass occupies residues 93–113; it reads IAFIIGFFYIAFKIYYFQWYG. Topologically, residues 114–148 are cytoplasmic; that stretch reads DELDEVVEALETFHPWAQKGPGAVDYRTAKRWYFT. Residues 149 to 169 traverse the membrane as a helical segment; that stretch reads LAFFLASSWLVFLCIFILLLI. Residues 170 to 222 are Extracellular-facing; the sequence is TSPLWVHQQILPLHAAFPFQWHEKSIHPISHAFIYLFQTWNVMYFLTWLVCIE. A helical transmembrane segment spans residues 223 to 243; it reads GLSVSIYVEITFAIEVLCLEL. Residues 244–279 lie on the Cytoplasmic side of the membrane; the sequence is RHLHQRCHGYEQLRLETNRLVQFHQKIVHILDHTNK. Residues 280-300 traverse the membrane as a helical segment; it reads VFHGTLIMQMGVNFFLVSLSV. At 301 to 312 the chain is on the extracellular side; sequence LEAMEARKDPKV. The chain crosses the membrane as a helical span at residues 313 to 333; the sequence is VAQFAVLMLLALGHLSMWSYF. Residues 334-385 are Cytoplasmic-facing; the sequence is GDLLSQKSLTISEAAYEAYDPIKGSKDVYRDLCLIIRRGQEPLIMRASPFPS. The helical transmembrane segment at 386 to 406 threads the bilayer; it reads FNFINYSAILNQCYGILTFLL. At 407–410 the chain is on the extracellular side; sequence KTLD.

This sequence belongs to the insect chemoreceptor superfamily. Heteromeric odorant receptor channel (TC 1.A.69) family. Or49a subfamily. As to quaternary structure, interacts with Orco. Complexes exist early in the endomembrane system in olfactory sensory neurons (OSNs), coupling these complexes to the conserved ciliary trafficking pathway.

The protein localises to the cell membrane. Odorant receptor which mediates acceptance or avoidance behavior, depending on its substrates. The odorant receptor repertoire encodes a large collection of odor stimuli that vary widely in identity, intensity, and duration. May form a complex with Orco to form odorant-sensing units, providing sensitive and prolonged odorant signaling and calcium permeability. The protein is Putative odorant receptor 65c (Or65c) of Drosophila melanogaster (Fruit fly).